The primary structure comprises 150 residues: UPF0336 protein SGR_2883 (150 aa).

The MaoC-like domain occupies 10-116 (RTYPPTPAYE…STIEAVKSLA (107 aa)).

It belongs to the UPF0336 family.

The protein is UPF0336 protein SGR_2883 of Streptomyces griseus subsp. griseus (strain JCM 4626 / CBS 651.72 / NBRC 13350 / KCC S-0626 / ISP 5235).